A 370-amino-acid polypeptide reads, in one-letter code: Histidinol-phosphate aminotransferase 1 (370 aa).

Lysine 229 is subject to N6-(pyridoxal phosphate)lysine.

This sequence belongs to the class-II pyridoxal-phosphate-dependent aminotransferase family. Histidinol-phosphate aminotransferase subfamily. As to quaternary structure, homodimer. Pyridoxal 5'-phosphate is required as a cofactor.

It catalyses the reaction L-histidinol phosphate + 2-oxoglutarate = 3-(imidazol-4-yl)-2-oxopropyl phosphate + L-glutamate. It functions in the pathway amino-acid biosynthesis; L-histidine biosynthesis; L-histidine from 5-phospho-alpha-D-ribose 1-diphosphate: step 7/9. The chain is Histidinol-phosphate aminotransferase 1 from Nitrosococcus oceani (strain ATCC 19707 / BCRC 17464 / JCM 30415 / NCIMB 11848 / C-107).